The following is a 273-amino-acid chain: Glutamate 5-kinase (273 aa).

Residue Lys15 coordinates ATP. The substrate site is built by Ser55, Asp142, and Asn158. ATP contacts are provided by residues 178 to 179 (SD) and 220 to 226 (TGGMLSK).

It belongs to the glutamate 5-kinase family.

The protein resides in the cytoplasm. It catalyses the reaction L-glutamate + ATP = L-glutamyl 5-phosphate + ADP. The protein operates within amino-acid biosynthesis; L-proline biosynthesis; L-glutamate 5-semialdehyde from L-glutamate: step 1/2. Its function is as follows. Catalyzes the transfer of a phosphate group to glutamate to form L-glutamate 5-phosphate. This chain is Glutamate 5-kinase, found in Streptococcus pyogenes serotype M2 (strain MGAS10270).